The chain runs to 218 residues: MEGKGKEIVVGHSISKSSVECHKYYLARRTTMEMLRDRGYDVSDEDINLSLQQFRALYGEHPDVDLLRISAKHRFDSSKKISVVFCGTGIVKVNAMRVIAADVLSRENITGLILVLQSHITNQALKAVELFSFKVELFEITDLLVNVSKHVLRPKHQVLNDKEKESLLKKFSIEEKQLPRLSSKDPIVRYYGLETGQVMKVTYKDELSESHVTYRCVS.

Belongs to the archaeal Rpo5/eukaryotic RPB5 RNA polymerase subunit family. Component of the RNA polymerase IV and V complexes. Interacts with NRPD1. Expressed inleaves, flower buds, flowers and siliques.

The protein resides in the nucleus. DNA-dependent RNA polymerase catalyzes the transcription of DNA into RNA using the four ribonucleoside triphosphates as substrates. Component of RNA polymerases IV and V which mediate short-interfering RNAs (siRNA) accumulation and subsequent RNA-directed DNA methylation-dependent (RdDM) transcriptional gene silencing (TGS) of endogenous repeated sequences, including transposable elements. The polypeptide is DNA-directed RNA polymerases IV and V subunit 5B (NRPD5B) (Arabidopsis thaliana (Mouse-ear cress)).